A 158-amino-acid polypeptide reads, in one-letter code: SsrA-binding protein (158 aa).

It belongs to the SmpB family.

It localises to the cytoplasm. Required for rescue of stalled ribosomes mediated by trans-translation. Binds to transfer-messenger RNA (tmRNA), required for stable association of tmRNA with ribosomes. tmRNA and SmpB together mimic tRNA shape, replacing the anticodon stem-loop with SmpB. tmRNA is encoded by the ssrA gene; the 2 termini fold to resemble tRNA(Ala) and it encodes a 'tag peptide', a short internal open reading frame. During trans-translation Ala-aminoacylated tmRNA acts like a tRNA, entering the A-site of stalled ribosomes, displacing the stalled mRNA. The ribosome then switches to translate the ORF on the tmRNA; the nascent peptide is terminated with the 'tag peptide' encoded by the tmRNA and targeted for degradation. The ribosome is freed to recommence translation, which seems to be the essential function of trans-translation. This Parafrankia sp. (strain EAN1pec) protein is SsrA-binding protein.